Consider the following 393-residue polypeptide: Formate-dependent phosphoribosylglycinamide formyltransferase (393 aa).

N(1)-(5-phospho-beta-D-ribosyl)glycinamide is bound by residues 22–23 and Glu-82; that span reads EL. Residues Arg-114, Lys-155, 160 to 165, 195 to 198, and Glu-203 each bind ATP; these read SSGKGQ and EGFV. The ATP-grasp domain maps to 119-308; the sequence is RLAAEELGLP…EFALHVRAIL (190 aa). 2 residues coordinate Mg(2+): Glu-267 and Glu-279. N(1)-(5-phospho-beta-D-ribosyl)glycinamide is bound by residues Asp-286, Lys-356, and 363–364; that span reads RR.

The protein belongs to the PurK/PurT family. In terms of assembly, homodimer.

It carries out the reaction N(1)-(5-phospho-beta-D-ribosyl)glycinamide + formate + ATP = N(2)-formyl-N(1)-(5-phospho-beta-D-ribosyl)glycinamide + ADP + phosphate + H(+). It participates in purine metabolism; IMP biosynthesis via de novo pathway; N(2)-formyl-N(1)-(5-phospho-D-ribosyl)glycinamide from N(1)-(5-phospho-D-ribosyl)glycinamide (formate route): step 1/1. In terms of biological role, involved in the de novo purine biosynthesis. Catalyzes the transfer of formate to 5-phospho-ribosyl-glycinamide (GAR), producing 5-phospho-ribosyl-N-formylglycinamide (FGAR). Formate is provided by PurU via hydrolysis of 10-formyl-tetrahydrofolate. In Nitratidesulfovibrio vulgaris (strain ATCC 29579 / DSM 644 / CCUG 34227 / NCIMB 8303 / VKM B-1760 / Hildenborough) (Desulfovibrio vulgaris), this protein is Formate-dependent phosphoribosylglycinamide formyltransferase.